A 236-amino-acid chain; its full sequence is Phosphatidylserine decarboxylase proenzyme (236 aa).

Residue Ser-203 is the Schiff-base intermediate with substrate; via pyruvic acid of the active site. Ser-203 bears the Pyruvic acid (Ser); by autocatalysis mark.

Belongs to the phosphatidylserine decarboxylase family. PSD-A subfamily. Heterodimer of a large membrane-associated beta subunit and a small pyruvoyl-containing alpha subunit. Requires pyruvate as cofactor. Is synthesized initially as an inactive proenzyme. Formation of the active enzyme involves a self-maturation process in which the active site pyruvoyl group is generated from an internal serine residue via an autocatalytic post-translational modification. Two non-identical subunits are generated from the proenzyme in this reaction, and the pyruvate is formed at the N-terminus of the alpha chain, which is derived from the carboxyl end of the proenzyme. The post-translation cleavage follows an unusual pathway, termed non-hydrolytic serinolysis, in which the side chain hydroxyl group of the serine supplies its oxygen atom to form the C-terminus of the beta chain, while the remainder of the serine residue undergoes an oxidative deamination to produce ammonia and the pyruvoyl prosthetic group on the alpha chain.

It is found in the cell membrane. The enzyme catalyses a 1,2-diacyl-sn-glycero-3-phospho-L-serine + H(+) = a 1,2-diacyl-sn-glycero-3-phosphoethanolamine + CO2. The protein operates within phospholipid metabolism; phosphatidylethanolamine biosynthesis; phosphatidylethanolamine from CDP-diacylglycerol: step 2/2. In terms of biological role, catalyzes the formation of phosphatidylethanolamine (PtdEtn) from phosphatidylserine (PtdSer). This chain is Phosphatidylserine decarboxylase proenzyme, found in Saccharopolyspora erythraea (strain ATCC 11635 / DSM 40517 / JCM 4748 / NBRC 13426 / NCIMB 8594 / NRRL 2338).